Consider the following 577-residue polypeptide: Cryptochrome DASH, chloroplastic/mitochondrial (577 aa).

A chloroplast and mitochondrion-targeting transit peptide spans 1–53; it reads MIKQPFLLTKFTPFSSKSKHTLFTFHCNFSIKMASLTARTTPTVQNVPGLTPE. The 142-residue stretch at 78–219 folds into the Photolyase/cryptochrome alpha/beta domain; sequence GVAIVWFRND…GNDPGSGNTT (142 aa). The segment at 550–577 is disordered; the sequence is TKKTGDSKTAFSSRRGRPEDNRRKRHGY.

The protein belongs to the DNA photolyase class-1 family. It depends on FAD as a cofactor. (6R)-5,10-methylene-5,6,7,8-tetrahydrofolate serves as cofactor. In terms of tissue distribution, expressed in the endosperm and embryo 96 hours after seed imbibition. In the embryo, detected in the root meristem, the root cap, the shoot apical meristem and the epidermis of cotyledons. In adult plants, detcted in roots, the whole leaf lamina, the stem and in glandular trichomes.

The protein resides in the plastid. It is found in the chloroplast. The protein localises to the mitochondrion. May have a photoreceptor function and might bind ss- and ds-DNA in a sequence non-specific manner. Lacks photolyase activity. Has a potential role in detecting the dawn and dusk transitions and, consequently, in circadian input pathways. The chain is Cryptochrome DASH, chloroplastic/mitochondrial from Solanum lycopersicum (Tomato).